A 152-amino-acid chain; its full sequence is Deoxyuridine 5'-triphosphate nucleotidohydrolase (152 aa).

Residues 71–73 (RSG), N84, 88–90 (LID), and M98 contribute to the substrate site.

This sequence belongs to the dUTPase family. As to quaternary structure, homotrimer. The cofactor is Mg(2+).

It catalyses the reaction dUTP + H2O = dUMP + diphosphate + H(+). It functions in the pathway pyrimidine metabolism; dUMP biosynthesis; dUMP from dCTP (dUTP route): step 2/2. In terms of biological role, this enzyme is involved in nucleotide metabolism: it produces dUMP, the immediate precursor of thymidine nucleotides and it decreases the intracellular concentration of dUTP so that uracil cannot be incorporated into DNA. The chain is Deoxyuridine 5'-triphosphate nucleotidohydrolase from Escherichia coli O1:K1 / APEC.